Consider the following 263-residue polypeptide: uncharacterized protein (263 aa).

This is an uncharacterized protein from Bacillus subtilis (strain 168).